The chain runs to 504 residues: Maturase K (504 aa).

Belongs to the intron maturase 2 family. MatK subfamily.

The protein localises to the plastid. It localises to the chloroplast. Its function is as follows. Usually encoded in the trnK tRNA gene intron. Probably assists in splicing its own and other chloroplast group II introns. The protein is Maturase K of Gossypium turneri (Cotton).